The following is a 482-amino-acid chain: Protein translocase subunit SecY (482 aa).

Residues 1 to 22 (MVIKKPANKVDKKSTFKSSNKK) form a disordered region. A run of 10 helical transmembrane segments spans residues 41–61 (ILFT…TVPG), 92–112 (FSIL…VQLL), 137–157 (LTKI…IFTL), 177–197 (AFYY…MLWI), 201–221 (ITIK…IIIS), 243–263 (IFFS…LVIL), 303–323 (VIPV…SQII), 342–362 (FNTW…TFLY), 405–425 (VVGS…SKLT), and 426–446 (QLPS…SVAI).

Belongs to the SecY/SEC61-alpha family. As to quaternary structure, component of the Sec protein translocase complex. Heterotrimer consisting of SecY, SecE and SecG subunits. The heterotrimers can form oligomers, although 1 heterotrimer is thought to be able to translocate proteins. Interacts with the ribosome. Interacts with SecDF, and other proteins may be involved. Interacts with SecA.

Its subcellular location is the cell membrane. Functionally, the central subunit of the protein translocation channel SecYEG. Consists of two halves formed by TMs 1-5 and 6-10. These two domains form a lateral gate at the front which open onto the bilayer between TMs 2 and 7, and are clamped together by SecE at the back. The channel is closed by both a pore ring composed of hydrophobic SecY resides and a short helix (helix 2A) on the extracellular side of the membrane which forms a plug. The plug probably moves laterally to allow the channel to open. The ring and the pore may move independently. In Mycoplasma capricolum subsp. capricolum (strain California kid / ATCC 27343 / NCTC 10154), this protein is Protein translocase subunit SecY.